The chain runs to 864 residues: MVASARVQKLVRRYKLAIATALAILLLQGLVVWSFSGLEEDEPGEKGRQRKPRPLDPGEGSKDTDSSAGRRGSAGRRHGRWRGRAESPGVPVAKVVRAVTSRQRASRRVPPAPPPEAPGRQNLSGAAAGEALIGAAGFPQHGDTGSVEGAPQPTDNSFTPKCEIVGKDALSALARASTKHCQQEIANVVCLHQAGNLMPKSVPRHCQLAGKVSPGIQWEEVRAQQPVSGPLVRIAYMLVVHGRAVRQLKRLLKAVYHEEHFFYIHVDKRSNYLYREVVELAQHYDNVRVTPWRMVTIWGGASLLRMYLRSMKDLLETPGWTWDFFINLSATDYPTRTNEELVAFLSKNRDKNFLKSHGRDNSRFIKKQGLDRLFHECDSHMWRLGERQIPAGIVVDGGSDWFVLTRSFVEYVVYTEDPLVAQLRQFYTYTLLPAESFFHTVLENSPACESLVDNNLRVTNWNRKLGCKCQYKHIVDWCGCSPNDFKPQDFLRLQQVSRPTFFARKFESTVNQEVLEILDFHLYGSYPPGTPALKAYWENIYDMADGPSGLSDVLLTAYTAFARISLRHAATVSPLATAVCRFEPRGLPSSVHLYFYDDHFQGYLVTQAVQPSAQGPAETLEMWLMPQRLLKPLGHSDQASRLQSLEVGTEWDPKERLFRNFGGLLGPLDEPVAMQRWARGPNLTATVVWIDPTYVVATSYDITVDADTEVTQYKPPLSLPLRPGAWTVRLLQFWEPLGETRFLVLPLTFNHKLPLRKDDASWLHAGPPHNEYMEQSFQGLSGILNLPQPEAVEEAARRHTELTGPALEAWTDGELSSFWSVAGLCAIGPSSCPSLELCRLTSWSSLSPDPKSELGPVKADGRLR.

The Cytoplasmic segment spans residues 1-15 (MVASARVQKLVRRYK). A helical; Signal-anchor for type II membrane protein membrane pass occupies residues 16-36 (LAIATALAILLLQGLVVWSFS). The Lumenal segment spans residues 37-864 (GLEEDEPGEK…GPVKADGRLR (828 aa)). 2 disordered regions span residues 39–123 (EEDE…RQNL) and 136–158 (AGFP…DNSF). The span at 53–65 (RPLDPGEGSKDTD) shows a compositional bias: basic and acidic residues. Over residues 73–82 (SAGRRHGRWR) the composition is skewed to basic residues. Residue asparagine 122 is glycosylated (N-linked (GlcNAc...) asparagine). 4 cysteine pairs are disulfide-bonded: cysteine 162/cysteine 190, cysteine 206/cysteine 448, cysteine 467/cysteine 480, and cysteine 469/cysteine 478. Residues valine 239, aspartate 267, and 296-298 (TIW) each bind UDP-alpha-D-xylose. Asparagine 327 carries an N-linked (GlcNAc...) asparagine glycan. 400-401 (DW) serves as a coordination point for UDP-alpha-D-xylose. UDP-alpha-D-xylose-binding positions include serine 481 and 504–505 (RK). 2 disulfide bridges follow: cysteine 580–cysteine 832 and cysteine 825–cysteine 838. Asparagine 682 carries N-linked (GlcNAc...) asparagine glycosylation.

Belongs to the glycosyltransferase 14 family. XylT subfamily. In terms of assembly, monomer. It depends on Mg(2+) as a cofactor. Mn(2+) is required as a cofactor. Post-translationally, contains disulfide bonds.

It localises to the golgi apparatus membrane. It is found in the secreted. It carries out the reaction UDP-alpha-D-xylose + L-seryl-[protein] = 3-O-(beta-D-xylosyl)-L-seryl-[protein] + UDP + H(+). It participates in glycan metabolism; chondroitin sulfate biosynthesis. The protein operates within glycan metabolism; heparan sulfate biosynthesis. Functionally, catalyzes the first step in the biosynthesis of chondroitin sulfate, heparan sulfate and dermatan sulfate proteoglycans, such as DCN. Transfers D-xylose from UDP-D-xylose to specific serine residues of the core protein. The sequence is that of Xylosyltransferase 2 (Xylt2) from Rattus norvegicus (Rat).